The chain runs to 956 residues: DNA ligase 4 (956 aa).

The ATP site is built by Glu307, Lys309, Ile310, Arg314, Glu371, Phe409, Glu476, Lys481, Lys498, and Lys500. Residue Lys309 is the N6-AMP-lysine intermediate of the active site. Glu371 contacts Mg(2+). Position 476 (Glu476) interacts with Mg(2+). The segment at 666–700 is disordered; that stretch reads LEDRKRRNAGPGRGAKRLKLANVSSDEDELGTDER. BRCT domains are found at residues 700–793 and 857–956; these read RPTS…PRNL and PKGM…DYPL.

The protein belongs to the ATP-dependent DNA ligase family. The cofactor is Mg(2+).

The protein resides in the nucleus. It catalyses the reaction ATP + (deoxyribonucleotide)n-3'-hydroxyl + 5'-phospho-(deoxyribonucleotide)m = (deoxyribonucleotide)n+m + AMP + diphosphate.. DNA ligase involved in DNA non-homologous end joining (NHEJ); required for double-strand break (DSB) repair. This chain is DNA ligase 4 (LIG4), found in Yarrowia lipolytica (strain CLIB 122 / E 150) (Yeast).